Reading from the N-terminus, the 483-residue chain is tRNA-2-methylthio-N(6)-dimethylallyladenosine synthase (483 aa).

An MTTase N-terminal domain is found at 31 to 148 (KKLYIETQGC…LPQMLDQHHA (118 aa)). Cysteine 40, cysteine 77, cysteine 111, cysteine 192, cysteine 196, and cysteine 199 together coordinate [4Fe-4S] cluster. The Radical SAM core domain maps to 178–410 (RVEGFKAFVS…QQVIKQSSIE (233 aa)). The region spanning 413–477 (DAMLGKIERV…LNLVYGELLN (65 aa)) is the TRAM domain.

It belongs to the methylthiotransferase family. MiaB subfamily. Monomer. [4Fe-4S] cluster is required as a cofactor.

The protein resides in the cytoplasm. It carries out the reaction N(6)-dimethylallyladenosine(37) in tRNA + (sulfur carrier)-SH + AH2 + 2 S-adenosyl-L-methionine = 2-methylsulfanyl-N(6)-dimethylallyladenosine(37) in tRNA + (sulfur carrier)-H + 5'-deoxyadenosine + L-methionine + A + S-adenosyl-L-homocysteine + 2 H(+). Its function is as follows. Catalyzes the methylthiolation of N6-(dimethylallyl)adenosine (i(6)A), leading to the formation of 2-methylthio-N6-(dimethylallyl)adenosine (ms(2)i(6)A) at position 37 in tRNAs that read codons beginning with uridine. This chain is tRNA-2-methylthio-N(6)-dimethylallyladenosine synthase, found in Acinetobacter baumannii (strain ACICU).